A 133-amino-acid polypeptide reads, in one-letter code: Large ribosomal subunit protein uL16c (133 aa).

Belongs to the universal ribosomal protein uL16 family. In terms of assembly, part of the 50S ribosomal subunit.

Its subcellular location is the plastid. The chain is Large ribosomal subunit protein uL16c from Euglena longa (Euglenophycean alga).